The primary structure comprises 295 residues: uncharacterized protein (295 aa).

Residues 57 to 67 (RKLLVKQKRKS) are compositionally biased toward basic residues. The tract at residues 57 to 94 (RKLLVKQKRKSNKEFQSNIIKKRKDEERKGTLKTEQAN) is disordered. The segment covering 79 to 88 (RKDEERKGTL) has biased composition (basic and acidic residues). Coiled coils occupy residues 87–116 (TLKT…YDQY) and 259–286 (DVLT…LGER).

The protein localises to the nucleus. This is an uncharacterized protein from Schizosaccharomyces pombe (strain 972 / ATCC 24843) (Fission yeast).